The chain runs to 424 residues: Imidazolonepropionase (424 aa).

The Fe(3+) site is built by His-85 and His-87. Positions 85 and 87 each coordinate Zn(2+). The 4-imidazolone-5-propanoate site is built by Arg-94, Tyr-157, and His-190. Position 157 (Tyr-157) interacts with N-formimidoyl-L-glutamate. His-255 lines the Fe(3+) pocket. His-255 provides a ligand contact to Zn(2+). Residue Glu-258 coordinates 4-imidazolone-5-propanoate. Residue Asp-329 coordinates Fe(3+). Asp-329 contacts Zn(2+). Residues Asn-331 and Gly-333 each contribute to the N-formimidoyl-L-glutamate site. Residue Ser-334 participates in 4-imidazolone-5-propanoate binding.

It belongs to the metallo-dependent hydrolases superfamily. HutI family. It depends on Zn(2+) as a cofactor. Fe(3+) serves as cofactor.

It localises to the cytoplasm. It catalyses the reaction 4-imidazolone-5-propanoate + H2O = N-formimidoyl-L-glutamate. The protein operates within amino-acid degradation; L-histidine degradation into L-glutamate; N-formimidoyl-L-glutamate from L-histidine: step 3/3. Catalyzes the hydrolytic cleavage of the carbon-nitrogen bond in imidazolone-5-propanoate to yield N-formimidoyl-L-glutamate. It is the third step in the universal histidine degradation pathway. The protein is Imidazolonepropionase of Brevibacillus brevis (strain 47 / JCM 6285 / NBRC 100599).